Consider the following 310-residue polypeptide: Homoserine O-acetyltransferase (310 aa).

Catalysis depends on cysteine 142, which acts as the Acyl-thioester intermediate. 2 residues coordinate substrate: lysine 163 and serine 192. The active-site Proton acceptor is the histidine 235. Glutamate 237 is an active-site residue. Arginine 249 serves as a coordination point for substrate.

This sequence belongs to the MetA family.

The protein localises to the cytoplasm. The catalysed reaction is L-homoserine + acetyl-CoA = O-acetyl-L-homoserine + CoA. It functions in the pathway amino-acid biosynthesis; L-methionine biosynthesis via de novo pathway; O-acetyl-L-homoserine from L-homoserine: step 1/1. Functionally, transfers an acetyl group from acetyl-CoA to L-homoserine, forming acetyl-L-homoserine. The chain is Homoserine O-acetyltransferase from Parabacteroides distasonis (strain ATCC 8503 / DSM 20701 / CIP 104284 / JCM 5825 / NCTC 11152).